The primary structure comprises 184 residues: MSKAVVVYFSGYGHTKRVAQAAAEGAQASLVEIDSEGNIPEAAWDLLDQAQSILFGAPTYMGSVPWQFKKFADATSRKWFVRQWQDKVFGGFTNSASLNGDKQVSLILMHTLASQHGGIWVSLGLAPANTSASSRADINNLGASVGALVQSPSDADAQAIPSGDLETVKLYAARVARIGQQLHA.

Residues 4 to 176 (AVVVYFSGYG…TVKLYAARVA (173 aa)) enclose the Flavodoxin-like domain. FMN-binding positions include 10–14 (SGYGH) and 91–147 (GFTN…SVGA).

This sequence belongs to the FldP flavodoxin family. It depends on FMN as a cofactor.

In terms of biological role, flavodoxins are low-potential electron donors to a number of redox enzymes. FldP protects the cell from oxidative stress and reactive oxygen species (ROS) damage, thereby expanding the capabilities of P.aeruginosa to thrive in hostile environments, and contributes to bacterial survival within the host. In vitro, is able to mediate ferredoxin-NADP(H) reductase (FNR)-driven cytochrome c reduction. This is Flavodoxin FldP from Pseudomonas aeruginosa (strain UCBPP-PA14).